Reading from the N-terminus, the 259-residue chain is Early E4 30 kDa protein (259 aa).

The protein belongs to the adenoviridae E4 30 to 34 kDa protein family. In terms of assembly, interacts with E1B-55k.

The protein resides in the host nucleus. Its subcellular location is the host cytoplasm. Its function is as follows. Plays a major role to prevent cellular inhibition of viral genome replication by nuclear bodies. Assembles an SCF-like E3 ubiquitin ligase complex based on the cellular proteins ELOB, ELOC, CUL5 and RBX1, in cooperation with viral E1B-55K. This viral RING-type ligase ubiquitinates cellular substrates prior to proteasomal degradation: p53/TP53, LIG4, MRE11-RAD50-NBS1 (MRN) complex, ITGA3, DAXX and BLM. This Canine adenovirus serotype 2 (strain Toronto A 26-61) (CAdV-2) protein is Early E4 30 kDa protein.